A 405-amino-acid polypeptide reads, in one-letter code: Formate-dependent phosphoribosylglycinamide formyltransferase (405 aa).

Residues 22 to 23 (EL) and E82 contribute to the N(1)-(5-phospho-beta-D-ribosyl)glycinamide site. ATP contacts are provided by residues R115, K162, 167-172 (SSGKGQ), 202-205 (EGFI), and E210. The ATP-grasp domain occupies 120 to 320 (RLAAETLGLP…EFELHARAIL (201 aa)). E279 and E291 together coordinate Mg(2+). N(1)-(5-phospho-beta-D-ribosyl)glycinamide is bound by residues D298, K367, and 374–375 (RR).

The protein belongs to the PurK/PurT family. In terms of assembly, homodimer.

The catalysed reaction is N(1)-(5-phospho-beta-D-ribosyl)glycinamide + formate + ATP = N(2)-formyl-N(1)-(5-phospho-beta-D-ribosyl)glycinamide + ADP + phosphate + H(+). It participates in purine metabolism; IMP biosynthesis via de novo pathway; N(2)-formyl-N(1)-(5-phospho-D-ribosyl)glycinamide from N(1)-(5-phospho-D-ribosyl)glycinamide (formate route): step 1/1. Its function is as follows. Involved in the de novo purine biosynthesis. Catalyzes the transfer of formate to 5-phospho-ribosyl-glycinamide (GAR), producing 5-phospho-ribosyl-N-formylglycinamide (FGAR). Formate is provided by PurU via hydrolysis of 10-formyl-tetrahydrofolate. This is Formate-dependent phosphoribosylglycinamide formyltransferase from Leptothrix cholodnii (strain ATCC 51168 / LMG 8142 / SP-6) (Leptothrix discophora (strain SP-6)).